Consider the following 278-residue polypeptide: Large ribosomal subunit protein uL2 (278 aa).

2 disordered regions span residues 1 to 58 (MAIR…GGGH) and 225 to 278 (VMNP…KNKR). Residues 37–58 (LHGRGGRNAHGRITTRHKGGGH) show a composition bias toward basic residues. A compositionally biased stretch (basic and acidic residues) spans 253-267 (PEGRTRKNKASDKLI). The span at 268-278 (VRRRRTGKNKR) shows a compositional bias: basic residues.

The protein belongs to the universal ribosomal protein uL2 family. As to quaternary structure, part of the 50S ribosomal subunit. Forms a bridge to the 30S subunit in the 70S ribosome.

In terms of biological role, one of the primary rRNA binding proteins. Required for association of the 30S and 50S subunits to form the 70S ribosome, for tRNA binding and peptide bond formation. It has been suggested to have peptidyltransferase activity; this is somewhat controversial. Makes several contacts with the 16S rRNA in the 70S ribosome. The chain is Large ribosomal subunit protein uL2 from Rhodococcus opacus (strain B4).